The primary structure comprises 72 residues: Mitochondrial import receptor subunit TOM7-1 (72 aa).

The Cytoplasmic portion of the chain corresponds to 2 to 41 (LKPKGKNTKKAAAADEDDGAVAVVGKFVKEWGTWTAKKAK). The chain crosses the membrane as a helical span at residues 42–59 (VITHYGFIPLVIIIGMNS). Residues 60–72 (EPKPSLSQLLSPV) lie on the Mitochondrial intermembrane side of the membrane.

Belongs to the Tom7 family. In terms of assembly, forms part of the preprotein translocase complex of the outer mitochondrial membrane (TOM complex).

It localises to the mitochondrion outer membrane. Its function is as follows. Seems to act as a modulator of the dynamics of the mitochondrial protein transport machinery. Seems to promote the dissociation of subunits of the outer membrane translocase. The polypeptide is Mitochondrial import receptor subunit TOM7-1 (TOM7-1) (Solanum tuberosum (Potato)).